We begin with the raw amino-acid sequence, 334 residues long: Large ribosomal subunit protein uL3 (334 aa).

Positions methionine 1–arginine 10 are enriched in basic residues. A disordered region spans residues methionine 1–arginine 20.

This sequence belongs to the universal ribosomal protein uL3 family. Part of the 50S ribosomal subunit. Forms a cluster with proteins L14 and L24e.

In terms of biological role, one of the primary rRNA binding proteins, it binds directly near the 3'-end of the 23S rRNA, where it nucleates assembly of the 50S subunit. The protein is Large ribosomal subunit protein uL3 of Methanococcus maripaludis (strain C7 / ATCC BAA-1331).